Here is a 195-residue protein sequence, read N- to C-terminus: Elongation factor P (195 aa).

This sequence belongs to the elongation factor P family.

It localises to the cytoplasm. It participates in protein biosynthesis; polypeptide chain elongation. In terms of biological role, involved in peptide bond synthesis. Stimulates efficient translation and peptide-bond synthesis on native or reconstituted 70S ribosomes in vitro. Probably functions indirectly by altering the affinity of the ribosome for aminoacyl-tRNA, thus increasing their reactivity as acceptors for peptidyl transferase. The sequence is that of Elongation factor P from Rhodopirellula baltica (strain DSM 10527 / NCIMB 13988 / SH1).